The sequence spans 580 residues: Probable RNA-binding protein CG14230 (580 aa).

Residues 4 to 81 (TRFFLADLPT…EKLRVSLAKE (78 aa)) form the RRM domain. Residues 89–100 (REREENQRREQG) are compositionally biased toward basic and acidic residues. Disordered stretches follow at residues 89–131 (RERE…EDEE) and 173–211 (QHRK…KSAI). Positions 110–120 (PSSQLLVQSGQ) are enriched in polar residues. Ser-231 is subject to Phosphoserine. 2 stretches are compositionally biased toward acidic residues: residues 254–263 (ENDDDEEEEQ) and 298–313 (NEEE…EPEE). Disordered regions lie at residues 254 to 316 (ENDD…ESER), 333 to 395 (SAND…SAVS), and 463 to 520 (PFSY…IPRN). Basic and acidic residues-rich tracts occupy residues 348-358 (LRFDPAKEGHQ) and 365-377 (QPKE…EETS). The segment covering 386–395 (AGNSQASAVS) has biased composition (polar residues). Ser-468 carries the phosphoserine modification. Thr-475 is subject to Phosphothreonine.

The sequence is that of Probable RNA-binding protein CG14230 from Drosophila melanogaster (Fruit fly).